Here is a 165-residue protein sequence, read N- to C-terminus: Methylated-DNA--protein-cysteine methyltransferase (165 aa).

Cysteine 126 functions as the Nucleophile; methyl group acceptor in the catalytic mechanism.

It belongs to the MGMT family.

It localises to the cytoplasm. It catalyses the reaction a 6-O-methyl-2'-deoxyguanosine in DNA + L-cysteinyl-[protein] = S-methyl-L-cysteinyl-[protein] + a 2'-deoxyguanosine in DNA. The enzyme catalyses a 4-O-methyl-thymidine in DNA + L-cysteinyl-[protein] = a thymidine in DNA + S-methyl-L-cysteinyl-[protein]. Its function is as follows. Involved in the cellular defense against the biological effects of O6-methylguanine (O6-MeG) and O4-methylthymine (O4-MeT) in DNA. Repairs the methylated nucleobase in DNA by stoichiometrically transferring the methyl group to a cysteine residue in the enzyme. This is a suicide reaction: the enzyme is irreversibly inactivated. The polypeptide is Methylated-DNA--protein-cysteine methyltransferase (Mycobacterium bovis (strain ATCC BAA-935 / AF2122/97)).